The following is a 127-amino-acid chain: Multifunctional methyltransferase subunit trm112 (127 aa).

The 122-residue stretch at 2 to 123 (KVMTLNFLTC…KNGVANFLLP (122 aa)) folds into the TRM112 domain.

Belongs to the TRM112 family. Heterodimer of mtq2-rmt-1/trm112, forming the eRF1 methyltransferase. Rmt-1/trm112 is necessary for the solubility and activity of the catalytic subunit mtq2. Interacts with trm11; required for full tRNA methyltransferase activity. Interacts with bud23; required for full rRNA methyltransferase activity.

The protein resides in the cytoplasm. It localises to the nucleus. Functionally, acts as an activator of both rRNA/tRNA and protein methyltransferases. Together with methyltransferase mtq2, required for the methylation of eRF1 on 'Gln-182'. Together with methyltransferase trm11, required for the formation of 2-methylguanosine at position 10 (m2G10) in tRNA. Together with methyltransferase bud23, required for the formation of a 7-methylguanine in 18S rRNA. Involved in biogenesis of both 40S and 60S ribosomal subunits. This chain is Multifunctional methyltransferase subunit trm112 (rmt-1), found in Neurospora crassa (strain ATCC 24698 / 74-OR23-1A / CBS 708.71 / DSM 1257 / FGSC 987).